We begin with the raw amino-acid sequence, 460 residues long: MLSRQFVREHPETVRDAIERKGVTGVDLDEILDIDEEWRELKAEGDGLRQERNEVSSKIGELKQDGKDEEAQEAIDRSQELKDELQDIEERADELESQLEEALLELPNIPHESVPTGEGEADNVERYREGFDDLRDLPDEVVPHYDLGEDLDLLDFERGAKVSGGGYQFVKGEGARLEHALIQFMLDVHREQEYVDVLPPIPVNSDSMEGTGQLPKFAEDAYRVGARQDDDYDSDDLWLLPTAEVPVTNMYRGEILLDDDLPVKHQAFSPNFRREAGEHGTETRGYVRVHQFHKVELVNFVRPENSYDRLESLLDEAAEVLDRLELPYRVLDMCTGDMGFTQAKKYDIEVWAPGDDMEDGPDRGGRWLEVSSVSNFEDFQARRAGLRYRPERHESADYLHTLNGSGLAVPRVLVAIMEYYQNDDGTITVPEPLRPYMGGQEVIEGSEKIGESAVGAGEKE.

A compositionally biased stretch (basic and acidic residues) spans 43–66 (AEGDGLRQERNEVSSKIGELKQDG). Residues 43-81 (AEGDGLRQERNEVSSKIGELKQDGKDEEAQEAIDRSQEL) form a disordered region. 242-244 (TAE) contributes to the L-serine binding site. Residues 273–275 (RRE) and valine 289 contribute to the ATP site. An L-serine-binding site is contributed by glutamate 296. 369 to 372 (EVSS) serves as a coordination point for ATP. Serine 405 provides a ligand contact to L-serine.

It belongs to the class-II aminoacyl-tRNA synthetase family. Type-1 seryl-tRNA synthetase subfamily. As to quaternary structure, homodimer. The tRNA molecule binds across the dimer.

The protein localises to the cytoplasm. It catalyses the reaction tRNA(Ser) + L-serine + ATP = L-seryl-tRNA(Ser) + AMP + diphosphate + H(+). The catalysed reaction is tRNA(Sec) + L-serine + ATP = L-seryl-tRNA(Sec) + AMP + diphosphate + H(+). It participates in aminoacyl-tRNA biosynthesis; selenocysteinyl-tRNA(Sec) biosynthesis; L-seryl-tRNA(Sec) from L-serine and tRNA(Sec): step 1/1. Its function is as follows. Catalyzes the attachment of serine to tRNA(Ser). Is also probably able to aminoacylate tRNA(Sec) with serine, to form the misacylated tRNA L-seryl-tRNA(Sec), which will be further converted into selenocysteinyl-tRNA(Sec). This is Serine--tRNA ligase (serS) from Haloarcula marismortui (strain ATCC 43049 / DSM 3752 / JCM 8966 / VKM B-1809) (Halobacterium marismortui).